A 324-amino-acid chain; its full sequence is Acetyl-coenzyme A carboxylase carboxyl transferase subunit alpha (324 aa).

The 255-residue stretch at 37-291 (ILEEKLENLE…DLMIQKTFQQ (255 aa)) folds into the CoA carboxyltransferase C-terminal domain.

The protein belongs to the AccA family. In terms of assembly, acetyl-CoA carboxylase is a heterohexamer composed of biotin carboxyl carrier protein (AccB), biotin carboxylase (AccC) and two subunits each of ACCase subunit alpha (AccA) and ACCase subunit beta (AccD).

It localises to the cytoplasm. The enzyme catalyses N(6)-carboxybiotinyl-L-lysyl-[protein] + acetyl-CoA = N(6)-biotinyl-L-lysyl-[protein] + malonyl-CoA. It functions in the pathway lipid metabolism; malonyl-CoA biosynthesis; malonyl-CoA from acetyl-CoA: step 1/1. In terms of biological role, component of the acetyl coenzyme A carboxylase (ACC) complex. First, biotin carboxylase catalyzes the carboxylation of biotin on its carrier protein (BCCP) and then the CO(2) group is transferred by the carboxyltransferase to acetyl-CoA to form malonyl-CoA. This Bacillus cereus (strain ATCC 14579 / DSM 31 / CCUG 7414 / JCM 2152 / NBRC 15305 / NCIMB 9373 / NCTC 2599 / NRRL B-3711) protein is Acetyl-coenzyme A carboxylase carboxyl transferase subunit alpha.